Consider the following 255-residue polypeptide: Hemin import ATP-binding protein HmuV (255 aa).

One can recognise an ABC transporter domain in the interval 2–238 (LQVEGLYLCR…AALKAVYGID (237 aa)). 34-41 (GPNGAGKS) is an ATP binding site.

This sequence belongs to the ABC transporter superfamily. Heme (hemin) importer (TC 3.A.1.14.5) family. As to quaternary structure, the complex is composed of two ATP-binding proteins (HmuV), two transmembrane proteins (HmuU) and a solute-binding protein (HmuT).

It is found in the cell inner membrane. Its function is as follows. Part of the ABC transporter complex HmuTUV involved in hemin import. Responsible for energy coupling to the transport system. This Pseudomonas putida (strain ATCC 47054 / DSM 6125 / CFBP 8728 / NCIMB 11950 / KT2440) protein is Hemin import ATP-binding protein HmuV.